Consider the following 392-residue polypeptide: Heat-inducible transcription repressor HrcA (392 aa).

It belongs to the HrcA family.

Functionally, negative regulator of class I heat shock genes (grpE-dnaK-dnaJ and groELS operons). Prevents heat-shock induction of these operons. The sequence is that of Heat-inducible transcription repressor HrcA from Chlamydia trachomatis serovar A (strain ATCC VR-571B / DSM 19440 / HAR-13).